The chain runs to 177 residues: Large ribosomal subunit protein uL6 (177 aa).

It belongs to the universal ribosomal protein uL6 family. Part of the 50S ribosomal subunit.

This protein binds to the 23S rRNA, and is important in its secondary structure. It is located near the subunit interface in the base of the L7/L12 stalk, and near the tRNA binding site of the peptidyltransferase center. The polypeptide is Large ribosomal subunit protein uL6 (Shewanella baltica (strain OS223)).